We begin with the raw amino-acid sequence, 100 residues long: Large ribosomal subunit protein uL23 (100 aa).

The protein belongs to the universal ribosomal protein uL23 family. In terms of assembly, part of the 50S ribosomal subunit. Contacts protein L29, and trigger factor when it is bound to the ribosome.

In terms of biological role, one of the early assembly proteins it binds 23S rRNA. One of the proteins that surrounds the polypeptide exit tunnel on the outside of the ribosome. Forms the main docking site for trigger factor binding to the ribosome. This Idiomarina loihiensis (strain ATCC BAA-735 / DSM 15497 / L2-TR) protein is Large ribosomal subunit protein uL23.